The following is a 261-amino-acid chain: Aromatic peroxygenase (261 aa).

C36 lines the heme pocket. N100, N137, N141, and N220 each carry an N-linked (GlcNAc...) asparagine glycan.

Belongs to the chloroperoxidase family. Heme b is required as a cofactor. N-glycosylated.

Its function is as follows. Aromatic peroxidase that oxidizes aryl alcohols into the corresponding aldehydes and then into the corresponding benzoic acids. Catalyzes the regioselective peroxide-dependent hydroxylation of naphthalene to 1-naphthol and to a far lesser extent 2-naphthol via a naphthalene 1,2-oxide intermediate. Halogenates phenol to 2-bromophenol and 4-bromophenol. Oxidizes the sulfur-containing heterocycle dibenzothiophene to yield sulfoxidation products, and trace amounts of ring-hydroxylation products. The polypeptide is Aromatic peroxygenase (Coprinellus radians (Coprophilous mushroom)).